The primary structure comprises 74 residues: uncharacterized protein (74 aa).

This is an uncharacterized protein from Bacillus subtilis (strain 168).